A 178-amino-acid chain; its full sequence is Ribosome maturation factor RimM (178 aa).

The PRC barrel domain maps to 103 to 177; it reads SKDEYYFFEI…KIVVKVPEWL (75 aa).

The protein belongs to the RimM family. Binds ribosomal protein uS19.

It is found in the cytoplasm. An accessory protein needed during the final step in the assembly of 30S ribosomal subunit, possibly for assembly of the head region. Essential for efficient processing of 16S rRNA. May be needed both before and after RbfA during the maturation of 16S rRNA. It has affinity for free ribosomal 30S subunits but not for 70S ribosomes. The chain is Ribosome maturation factor RimM from Thermosipho africanus (strain TCF52B).